The chain runs to 210 residues: Ribulose-phosphate 3-epimerase (210 aa).

Serine 9 provides a ligand contact to substrate. Positions 34, 36, and 68 each coordinate a divalent metal cation. The Proton acceptor role is filled by aspartate 36. Residues histidine 68, 144–147 (GFGG), 177–179 (DGG), and 199–200 (GS) each bind substrate. Residue aspartate 177 participates in a divalent metal cation binding. The active-site Proton donor is aspartate 177.

This sequence belongs to the ribulose-phosphate 3-epimerase family. A divalent metal cation is required as a cofactor.

It catalyses the reaction D-ribulose 5-phosphate = D-xylulose 5-phosphate. It functions in the pathway carbohydrate degradation. Its function is as follows. Catalyzes the reversible epimerization of D-ribulose 5-phosphate to D-xylulose 5-phosphate. The chain is Ribulose-phosphate 3-epimerase from Serratia marcescens.